Here is a 120-residue protein sequence, read N- to C-terminus: HTH-type transcriptional regulator NmtR (120 aa).

In terms of domain architecture, HTH arsR-type spans 15–109; it reads LDSQAAAQVA…EAIYHSEHLH (95 aa). The H-T-H motif DNA-binding region spans 49–72; that stretch reads VTDLAEAIGMEQSAVSHQLRVLRN. Residues D91, H93, H104, and H107 each contribute to the Ni(2+) site.

As to quaternary structure, homodimer.

Binding to DNA is inhibited by nickel and, to some extent, cobalt ions. Represses transcription of ctpJ/nmtA, by binding to its promoter region. The protein is HTH-type transcriptional regulator NmtR (nmtR) of Mycobacterium tuberculosis (strain ATCC 25618 / H37Rv).